The sequence spans 885 residues: Translation initiation factor IF-2 (885 aa).

The interval 1-295 is disordered; it reads MTDNKDDKTI…EKFKRSQMQE (295 aa). Residues 63–77 show a composition bias toward low complexity; that stretch reads PVAAAPAAARPAEQR. The segment covering 78–94 has biased composition (pro residues); the sequence is PMPPQPSGRPAPQPQPH. The segment covering 130-183 has biased composition (basic and acidic residues); the sequence is RDAEEAKRRAEEEVRRRREEEERIAREKEEAARRAAEEAARPAVEAEKVEEKVE. Over residues 184–201 the composition is skewed to low complexity; sequence AATPAVAETRPLSERPAP. Positions 383–550 constitute a tr-type G domain; that stretch reads ARPPIVTIMG…AILLQSEILD (168 aa). Residues 392-399 form a G1 region; sequence GHVDHGKT. Position 392 to 399 (392 to 399) interacts with GTP; sequence GHVDHGKT. A G2 region spans residues 417–421; the sequence is GITQH. Residues 438 to 441 are G3; that stretch reads DTPG. Residues 438 to 442 and 492 to 495 contribute to the GTP site; these read DTPGH and NKID. Positions 492 to 495 are G4; sequence NKID. Residues 528–530 are G5; the sequence is SAK.

The protein belongs to the TRAFAC class translation factor GTPase superfamily. Classic translation factor GTPase family. IF-2 subfamily.

It is found in the cytoplasm. Functionally, one of the essential components for the initiation of protein synthesis. Protects formylmethionyl-tRNA from spontaneous hydrolysis and promotes its binding to the 30S ribosomal subunits. Also involved in the hydrolysis of GTP during the formation of the 70S ribosomal complex. The polypeptide is Translation initiation factor IF-2 (Sinorhizobium medicae (strain WSM419) (Ensifer medicae)).